A 104-amino-acid polypeptide reads, in one-letter code: Urease subunit beta (104 aa).

Belongs to the urease beta subunit family. As to quaternary structure, heterotrimer of UreA (gamma), UreB (beta) and UreC (alpha) subunits. Three heterotrimers associate to form the active enzyme.

The protein localises to the cytoplasm. It catalyses the reaction urea + 2 H2O + H(+) = hydrogencarbonate + 2 NH4(+). Its pathway is nitrogen metabolism; urea degradation; CO(2) and NH(3) from urea (urease route): step 1/1. This Rhodococcus opacus (strain B4) protein is Urease subunit beta.